Here is a 392-residue protein sequence, read N- to C-terminus: Caveolae-associated protein 1 (392 aa).

Position 1 is an N-acetylmethionine (methionine 1). Over residues 1–10 the composition is skewed to basic and acidic residues; the sequence is MEDVTLHIVE. The tract at residues 1-45 is disordered; the sequence is MEDVTLHIVERPYSGFPDASSEGPEPTQGEARATEEPSGTGSDEL. The required for homotrimerization and for interaction with CAVIN2 and CAVIN3 stretch occupies residues 1–100; that stretch reads MEDVTLHIVE…IQGELSKLGK (100 aa). A phosphoserine mark is found at serine 21 and serine 38. Phosphothreonine is present on threonine 40. A phosphoserine mark is found at serine 42 and serine 48. The interval 54–64 is nuclear export signal; the sequence is VLVLSLLDKII. Residues 55–77 form a leucine-zipper 1 region; sequence LVLSLLDKIIGAVDQIQLTQAQL. Residue lysine 118 forms a Glycyl lysine isopeptide (Lys-Gly) (interchain with G-Cter in SUMO2) linkage. Serine 120 is modified (phosphoserine). Residue lysine 124 forms a Glycyl lysine isopeptide (Lys-Gly) (interchain with G-Cter in SUMO2) linkage. The tract at residues 138-154 is nuclear localization signal; that stretch reads KKLEVNEAELLRRRNFK. Tyrosine 158 carries the phosphotyrosine modification. Lysine 163 is covalently cross-linked (Glycyl lysine isopeptide (Lys-Gly) (interchain with G-Cter in SUMO1); alternate). Residue lysine 163 forms a Glycyl lysine isopeptide (Lys-Gly) (interchain with G-Cter in SUMO2); alternate linkage. Residue lysine 167 forms a Glycyl lysine isopeptide (Lys-Gly) (interchain with G-Cter in SUMO2) linkage. The segment at 168–188 is leucine-zipper 2; sequence LSVSKSLKESEALPEKEGDEL. Residues serine 169 and serine 171 each carry the phosphoserine modification. Residue lysine 172 forms a Glycyl lysine isopeptide (Lys-Gly) (interchain with G-Cter in SUMO2) linkage. Residues serine 173 and serine 177 each carry the phosphoserine modification. The span at 173–183 shows a compositional bias: basic and acidic residues; the sequence is SLKESEALPEK. The tract at residues 173–197 is disordered; the sequence is SLKESEALPEKEGDELGEGERPEDD. Over residues 184 to 197 the composition is skewed to acidic residues; sequence EGDELGEGERPEDD. Residue threonine 198 is modified to Phosphothreonine. A coiled-coil region spans residues 201–284; the sequence is IELSSDEAVE…RMNKLGTRLV (84 aa). A phosphoserine mark is found at serine 204 and serine 205. Positions 235 to 251 are nuclear localization signal; it reads KKAFSKEKMEKTKVRTR. Residues 259 to 299 are leucine-zipper 3; the sequence is LKTKENLEKTRHTLEKRMNKLGTRLVPVERREKLKTSRDKL. Serine 302 carries the phosphoserine modification. At threonine 304 the chain carries Phosphothreonine. A Phosphotyrosine modification is found at tyrosine 310. A Glycyl lysine isopeptide (Lys-Gly) (interchain with G-Cter in SUMO2) cross-link involves residue lysine 328. A disordered region spans residues 347-367; the sequence is GPEDDEVGAERGEATDLLRGS. Phosphoserine is present on residues serine 367, serine 368, serine 381, serine 389, and serine 391.

The protein belongs to the CAVIN family. Component of the CAVIN complex composed of CAVIN1, CAVIN2, CAVIN3 and CAVIN4. Homotrimer. Interacts with LIPE in the adipocyte cytoplasm. Interacts with RNA polymerase I subunit POLR1A/RPA1. Interacts with TTF1. Binds the 3' end of pre-rRNA. Interacts with transcription factor ZNF148. Interacts with CAV1, CAVIN2 and CAVIN3. Interacts with CAVIN4. Phosphorylated. Present in active and inactive forms. Changes in phosphorylation pattern may alter activity. Phosphorylation at Tyr-158 is essential for its function in the regulation of the ribosomal transcriptional activity. Post-translationally, monoubiquitinated. Expressed in the heart, stomach, adipose tissue and lung (at protein level). Expressed in testis, kidney, muscle, liver, spleen and brain.

It is found in the membrane. It localises to the caveola. Its subcellular location is the cell membrane. The protein resides in the microsome. The protein localises to the endoplasmic reticulum. It is found in the cytoplasm. It localises to the cytosol. Its subcellular location is the mitochondrion. The protein resides in the nucleus. Functionally, plays an important role in caveolae formation and organization. Essential for the formation of caveolae in all tissues. Core component of the CAVIN complex which is essential for recruitment of the complex to the caveolae in presence of calveolin-1 (CAV1). Essential for normal oligomerization of CAV1. Promotes ribosomal transcriptional activity in response to metabolic challenges in the adipocytes and plays an important role in the formation of the ribosomal transcriptional loop. Dissociates transcription complexes paused by DNA-bound TTF1, thereby releasing both RNA polymerase I and pre-RNA from the template. The caveolae biogenesis pathway is required for the secretion of proteins such as GASK1A. This Mus musculus (Mouse) protein is Caveolae-associated protein 1 (Cavin1).